Here is a 155-residue protein sequence, read N- to C-terminus: Small ribosomal subunit protein uS7 (155 aa).

This sequence belongs to the universal ribosomal protein uS7 family. As to quaternary structure, part of the 30S ribosomal subunit. Contacts proteins S9 and S11.

Functionally, one of the primary rRNA binding proteins, it binds directly to 16S rRNA where it nucleates assembly of the head domain of the 30S subunit. Is located at the subunit interface close to the decoding center, probably blocks exit of the E-site tRNA. The chain is Small ribosomal subunit protein uS7 from Helicobacter hepaticus (strain ATCC 51449 / 3B1).